We begin with the raw amino-acid sequence, 306 residues long: UDP-3-O-acyl-N-acetylglucosamine deacetylase (306 aa).

Positions 78, 237, and 241 each coordinate Zn(2+). The Proton donor role is filled by His264.

It belongs to the LpxC family. It depends on Zn(2+) as a cofactor.

It carries out the reaction a UDP-3-O-[(3R)-3-hydroxyacyl]-N-acetyl-alpha-D-glucosamine + H2O = a UDP-3-O-[(3R)-3-hydroxyacyl]-alpha-D-glucosamine + acetate. Its pathway is glycolipid biosynthesis; lipid IV(A) biosynthesis; lipid IV(A) from (3R)-3-hydroxytetradecanoyl-[acyl-carrier-protein] and UDP-N-acetyl-alpha-D-glucosamine: step 2/6. In terms of biological role, catalyzes the hydrolysis of UDP-3-O-myristoyl-N-acetylglucosamine to form UDP-3-O-myristoylglucosamine and acetate, the committed step in lipid A biosynthesis. The chain is UDP-3-O-acyl-N-acetylglucosamine deacetylase from Aromatoleum aromaticum (strain DSM 19018 / LMG 30748 / EbN1) (Azoarcus sp. (strain EbN1)).